The sequence spans 620 residues: Dihydroxy-acid dehydratase (620 aa).

Residue aspartate 82 coordinates Mg(2+). A [2Fe-2S] cluster-binding site is contributed by cysteine 123. Positions 124 and 125 each coordinate Mg(2+). Lysine 125 is modified (N6-carboxylysine). A [2Fe-2S] cluster-binding site is contributed by cysteine 197. Glutamate 493 is a Mg(2+) binding site. Serine 519 functions as the Proton acceptor in the catalytic mechanism.

The protein belongs to the IlvD/Edd family. Homodimer. It depends on [2Fe-2S] cluster as a cofactor. Mg(2+) is required as a cofactor.

The enzyme catalyses (2R)-2,3-dihydroxy-3-methylbutanoate = 3-methyl-2-oxobutanoate + H2O. It carries out the reaction (2R,3R)-2,3-dihydroxy-3-methylpentanoate = (S)-3-methyl-2-oxopentanoate + H2O. It functions in the pathway amino-acid biosynthesis; L-isoleucine biosynthesis; L-isoleucine from 2-oxobutanoate: step 3/4. The protein operates within amino-acid biosynthesis; L-valine biosynthesis; L-valine from pyruvate: step 3/4. Functionally, functions in the biosynthesis of branched-chain amino acids. Catalyzes the dehydration of (2R,3R)-2,3-dihydroxy-3-methylpentanoate (2,3-dihydroxy-3-methylvalerate) into 2-oxo-3-methylpentanoate (2-oxo-3-methylvalerate) and of (2R)-2,3-dihydroxy-3-methylbutanoate (2,3-dihydroxyisovalerate) into 2-oxo-3-methylbutanoate (2-oxoisovalerate), the penultimate precursor to L-isoleucine and L-valine, respectively. The protein is Dihydroxy-acid dehydratase of Bifidobacterium longum subsp. infantis (strain ATCC 15697 / DSM 20088 / JCM 1222 / NCTC 11817 / S12).